We begin with the raw amino-acid sequence, 426 residues long: Enolase 1 (426 aa).

Gln-163 is a binding site for (2R)-2-phosphoglycerate. Glu-205 acts as the Proton donor in catalysis. The Mg(2+) site is built by Asp-242, Glu-283, and Asp-310. Positions 335, 364, 365, and 386 each coordinate (2R)-2-phosphoglycerate. Lys-335 acts as the Proton acceptor in catalysis.

It belongs to the enolase family. Requires Mg(2+) as cofactor.

The protein resides in the cytoplasm. It is found in the secreted. It localises to the cell surface. The enzyme catalyses (2R)-2-phosphoglycerate = phosphoenolpyruvate + H2O. It participates in carbohydrate degradation; glycolysis; pyruvate from D-glyceraldehyde 3-phosphate: step 4/5. Functionally, catalyzes the reversible conversion of 2-phosphoglycerate (2-PG) into phosphoenolpyruvate (PEP). It is essential for the degradation of carbohydrates via glycolysis. The protein is Enolase 1 of Streptomyces coelicolor (strain ATCC BAA-471 / A3(2) / M145).